Consider the following 376-residue polypeptide: Chaperone protein DnaJ 2 (376 aa).

The J domain occupies aspartate 8–glycine 72. The segment at glycine 143–lysine 219 adopts a CR-type zinc-finger fold. Cysteine 156, cysteine 159, cysteine 172, cysteine 175, cysteine 194, cysteine 197, cysteine 207, and cysteine 210 together coordinate Zn(2+). CXXCXGXG motif repeat units follow at residues cysteine 156–glycine 163, cysteine 172–glycine 179, cysteine 194–glycine 201, and cysteine 207–glycine 214.

This sequence belongs to the DnaJ family. As to quaternary structure, homodimer. Requires Zn(2+) as cofactor.

It localises to the cytoplasm. Functionally, participates actively in the response to hyperosmotic and heat shock by preventing the aggregation of stress-denatured proteins and by disaggregating proteins, also in an autonomous, DnaK-independent fashion. Unfolded proteins bind initially to DnaJ; upon interaction with the DnaJ-bound protein, DnaK hydrolyzes its bound ATP, resulting in the formation of a stable complex. GrpE releases ADP from DnaK; ATP binding to DnaK triggers the release of the substrate protein, thus completing the reaction cycle. Several rounds of ATP-dependent interactions between DnaJ, DnaK and GrpE are required for fully efficient folding. Also involved, together with DnaK and GrpE, in the DNA replication of plasmids through activation of initiation proteins. This Aquifex aeolicus (strain VF5) protein is Chaperone protein DnaJ 2.